Consider the following 141-residue polypeptide: Endoribonuclease YbeY (141 aa).

3 residues coordinate Zn(2+): His105, His109, and Asp115.

Belongs to the endoribonuclease YbeY family. It depends on Zn(2+) as a cofactor.

The protein resides in the cytoplasm. Single strand-specific metallo-endoribonuclease involved in late-stage 70S ribosome quality control and in maturation of the 3' terminus of the 16S rRNA. The polypeptide is Endoribonuclease YbeY (Karelsulcia muelleri (strain GWSS) (Sulcia muelleri)).